The chain runs to 211 residues: Nucleoside triphosphate pyrophosphatase (211 aa).

Residue aspartate 78 is the Proton acceptor of the active site.

The protein belongs to the Maf family. A divalent metal cation is required as a cofactor.

Its subcellular location is the cytoplasm. It carries out the reaction a ribonucleoside 5'-triphosphate + H2O = a ribonucleoside 5'-phosphate + diphosphate + H(+). The catalysed reaction is a 2'-deoxyribonucleoside 5'-triphosphate + H2O = a 2'-deoxyribonucleoside 5'-phosphate + diphosphate + H(+). In terms of biological role, nucleoside triphosphate pyrophosphatase. May have a dual role in cell division arrest and in preventing the incorporation of modified nucleotides into cellular nucleic acids. This is Nucleoside triphosphate pyrophosphatase from Mycolicibacterium smegmatis (strain ATCC 700084 / mc(2)155) (Mycobacterium smegmatis).